A 407-amino-acid polypeptide reads, in one-letter code: MDIILGVVMFTLIVLALVLVILFAKSKLVPTGDITISVNGDADKAIVTQPGGKLLSALAGAGVFVSSACGGGGSCGQCRVKVKSGGGDILPTELDHITKGEAREGERLACQVAVKTDMDIELPEEIFGVKKWECTVISNDNKATFIKELKLQIPDGESVPFRAGGYIQIEAPAHHVKYADYDIPQEYREDWEKFNLFRYESKVNEETIRAYSMANYPEEHGIIMLNVRIATPPPNNPDVPPGIMSSYIWSLKEGDKCTISGPFGEFFAKDTDAEMVFIGGGAGMAPMRSHIFDQLKRLHSKRKMSFWYGARSKREMFYVEDFDGLAAENDNFVWHCALSDPLPEDNWDGYTGFIHNVLYENYLRDHEAPEDCEYYMCGPPMMNAAVIGMLKDLGVEDENILLDDFGG.

A helical membrane pass occupies residues 3–23; the sequence is IILGVVMFTLIVLALVLVILF. One can recognise a 2Fe-2S ferredoxin-type domain in the interval 32-126; that stretch reads GDITISVNGD…DMDIELPEEI (95 aa). Positions 69, 75, 78, and 110 each coordinate [2Fe-2S] cluster. An FAD-binding FR-type domain is found at 129-269; it reads VKKWECTVIS…SGPFGEFFAK (141 aa). The segment at 272-389 is catalytic; the sequence is DAEMVFIGGG…PMMNAAVIGM (118 aa).

The protein belongs to the NqrF family. In terms of assembly, composed of six subunits; NqrA, NqrB, NqrC, NqrD, NqrE and NqrF. [2Fe-2S] cluster is required as a cofactor. FAD serves as cofactor.

The protein resides in the cell inner membrane. The catalysed reaction is a ubiquinone + n Na(+)(in) + NADH + H(+) = a ubiquinol + n Na(+)(out) + NAD(+). Functionally, NQR complex catalyzes the reduction of ubiquinone-1 to ubiquinol by two successive reactions, coupled with the transport of Na(+) ions from the cytoplasm to the periplasm. The first step is catalyzed by NqrF, which accepts electrons from NADH and reduces ubiquinone-1 to ubisemiquinone by a one-electron transfer pathway. The chain is Na(+)-translocating NADH-quinone reductase subunit F from Vibrio parahaemolyticus serotype O3:K6 (strain RIMD 2210633).